The following is a 536-amino-acid chain: Chaperonin GroEL 2 (536 aa).

ATP-binding positions include 29 to 32 (TLGP), 86 to 90 (DGTTT), G412, and D495.

Belongs to the chaperonin (HSP60) family. Forms a cylinder of 14 subunits composed of two heptameric rings stacked back-to-back. Interacts with the co-chaperonin GroES.

Its subcellular location is the cytoplasm. It carries out the reaction ATP + H2O + a folded polypeptide = ADP + phosphate + an unfolded polypeptide.. Its function is as follows. Together with its co-chaperonin GroES, plays an essential role in assisting protein folding. The GroEL-GroES system forms a nano-cage that allows encapsulation of the non-native substrate proteins and provides a physical environment optimized to promote and accelerate protein folding. The protein is Chaperonin GroEL 2 of Arthrobacter sp. (strain FB24).